Here is a 515-residue protein sequence, read N- to C-terminus: Spermatogenesis-associated protein 2 (515 aa).

In terms of domain architecture, PUB spans 78 to 150 (ALHCAFSMLE…VYKLKELVES (73 aa)). The PIM motif signature appears at 321 to 338 (TYFSTQDDVDLYTDSEPR). Residues 429-452 (GHQTQGLDRLAPVHSKPKPSTTAT) form a disordered region.

This sequence belongs to the SPATA2 family. Interacts (via the PIM motif) with RNF31/HOIP (via the PUB domain); the interaction is direct. Interacts (via the PUB domain) with CYLD; the interaction is direct. As to expression, widely expressed, with highest expression in testis, lung and intestine, and lower expression in brain, heart and spleen. Present at high level in Sertoli cells: expressed from stage I to stage XII of the testis seminiferous epithelium (at protein level).

It localises to the cytoplasm. The protein resides in the nucleus. Functionally, bridging factor that mediates the recruitment of CYLD to the LUBAC complex, thereby regulating TNF-alpha-induced necroptosis. Acts as a direct binding intermediate that bridges RNF31/HOIP, the catalytic subunit of the LUBAC complex, and the deubiquitinase (CYLD), thereby recruiting CYLD to the TNF-R1 signaling complex (TNF-RSC). Required to activate the 'Met-1'- (linear) and 'Lys-63'-linked deubiquitinase activities of CYLD. Controls the kinase activity of RIPK1 and TNF-alpha-induced necroptosis by promoting 'Met-1'-linked deubiquitination of RIPK1 by CYLD. The polypeptide is Spermatogenesis-associated protein 2 (Mus musculus (Mouse)).